We begin with the raw amino-acid sequence, 243 residues long: F-box protein pof15 (243 aa).

In terms of domain architecture, F-box spans 28–73 (QTSSTLLPVEVIDSVMQYLPAHDVIQSSFASYPLTLIANKIIRARL).

It participates in protein modification; protein ubiquitination. Probable substrate recognition component of a SCF (SKP1-CUL1-F-box protein) E3 ubiquitin-protein ligase complex that mediates the ubiquitination and subsequent proteasomal degradation of target proteins. In Schizosaccharomyces pombe (strain 972 / ATCC 24843) (Fission yeast), this protein is F-box protein pof15 (pof15).